A 540-amino-acid chain; its full sequence is MTIIAISIMNVVIGIAILGVILRKKIMPNQKFQRIFILGVQGILIVLSGIMLIGCEGTDIINRISPYINMVTVYSNNVNINIGYSIDGISAIFIFLTIILILSCNLISIRVIKEKTEQKFQIMLLLTEILIINFFAATDLVQLYIVYEATLIPMVIMIGVWGSRTEKKIAAFQILIYTLIGSIFMLMSIGILYSTLGTTDYIMIREYIDVLPENVRKLIFIGFFIGFAVKIPIAPLHLWLLRAHVEAPTAGSVLLAGILLKLGGYGYIRYNIGLFPDLCEYYFPIIGGICLISILYTGIATLTQLDVKRIVAYSSISHMNVIVLGLFSGVLQGIEGGIILMIGHGVVSGGLFLCIGVIYDRCKTRIVYAYNNLVHVMPIMAILFFLLVLGNIAFPITSNFVGELLIFIGLIKKNIIIAFFSALSMIVTAIYSFWLYNRIFFVNEIIKREANEVISSKGQIVADMNALFLIEDVMKKKEERGIDDIGQPKEVKKEQLIYSDVNIFEFTSISLMVIMMIIIGMKPSVVEGFIAINCLELISK.

14 helical membrane-spanning segments follow: residues 2–22 (TIIA…GVIL), 35–55 (IFIL…LIGC), 89–109 (ISAI…LISI), 118–138 (QKFQ…FAAT), 140–160 (LVQL…MIGV), 172–192 (FQIL…IGIL), 218–238 (LIFI…PLHL), 248–268 (PTAG…YGYI), 282–302 (YFPI…IATL), 310–330 (IVAY…FSGV), 338–358 (IILM…IGVI), 376–396 (VMPI…AFPI), 415–435 (IIIA…SFWL), and 501–521 (VNIF…IIGM).

The protein belongs to the complex I subunit 4 family.

The protein localises to the mitochondrion membrane. It carries out the reaction a ubiquinone + NADH + 5 H(+)(in) = a ubiquinol + NAD(+) + 4 H(+)(out). Its function is as follows. Core subunit of the mitochondrial membrane respiratory chain NADH dehydrogenase (Complex I) that is believed to belong to the minimal assembly required for catalysis. Complex I functions in the transfer of electrons from NADH to the respiratory chain. The immediate electron acceptor for the enzyme is believed to be ubiquinone. This is NADH-ubiquinone oxidoreductase chain 4 (nad4) from Dictyostelium discoideum (Social amoeba).